A 276-amino-acid chain; its full sequence is S-adenosylmethionine decarboxylase proenzyme (276 aa).

The Schiff-base intermediate with substrate; via pyruvic acid role is filled by Ser126. Pyruvic acid (Ser); by autocatalysis is present on Ser126. The Proton acceptor; for processing activity role is filled by His131. Cys154 acts as the Proton donor; for catalytic activity in catalysis.

This sequence belongs to the prokaryotic AdoMetDC family. Type 2 subfamily. As to quaternary structure, heterooctamer of four alpha and four beta chains arranged as a tetramer of alpha/beta heterodimers. Pyruvate serves as cofactor. In terms of processing, is synthesized initially as an inactive proenzyme. Formation of the active enzyme involves a self-maturation process in which the active site pyruvoyl group is generated from an internal serine residue via an autocatalytic post-translational modification. Two non-identical subunits are generated from the proenzyme in this reaction, and the pyruvate is formed at the N-terminus of the alpha chain, which is derived from the carboxyl end of the proenzyme. The post-translation cleavage follows an unusual pathway, termed non-hydrolytic serinolysis, in which the side chain hydroxyl group of the serine supplies its oxygen atom to form the C-terminus of the beta chain, while the remainder of the serine residue undergoes an oxidative deamination to produce ammonia and the pyruvoyl group blocking the N-terminus of the alpha chain.

It catalyses the reaction S-adenosyl-L-methionine + H(+) = S-adenosyl 3-(methylsulfanyl)propylamine + CO2. Its pathway is amine and polyamine biosynthesis; S-adenosylmethioninamine biosynthesis; S-adenosylmethioninamine from S-adenosyl-L-methionine: step 1/1. Functionally, catalyzes the decarboxylation of S-adenosylmethionine to S-adenosylmethioninamine (dcAdoMet), the propylamine donor required for the synthesis of the polyamines spermine and spermidine from the diamine putrescine. This Alcanivorax borkumensis (strain ATCC 700651 / DSM 11573 / NCIMB 13689 / SK2) protein is S-adenosylmethionine decarboxylase proenzyme.